Reading from the N-terminus, the 185-residue chain is Threonylcarbamoyl-AMP synthase (185 aa).

The YrdC-like domain occupies 4–185; it reads DWRVQQVARV…LRSGEVIRPA (182 aa).

This sequence belongs to the SUA5 family. TsaC subfamily.

It is found in the cytoplasm. The enzyme catalyses L-threonine + hydrogencarbonate + ATP = L-threonylcarbamoyladenylate + diphosphate + H2O. Required for the formation of a threonylcarbamoyl group on adenosine at position 37 (t(6)A37) in tRNAs that read codons beginning with adenine. Catalyzes the conversion of L-threonine, HCO(3)(-)/CO(2) and ATP to give threonylcarbamoyl-AMP (TC-AMP) as the acyladenylate intermediate, with the release of diphosphate. The sequence is that of Threonylcarbamoyl-AMP synthase from Stutzerimonas stutzeri (strain A1501) (Pseudomonas stutzeri).